A 604-amino-acid chain; its full sequence is Siderophore iron transporter mirB (604 aa).

Residues 1-61 (MTIGSKFSLL…DNSSDEALPS (61 aa)) form a disordered region. Helical transmembrane passes span 73–95 (AVTL…LVTL), 115–137 (FQSH…ALYI), 149–168 (AEGW…MMAA), 178–200 (ADVF…AADI), 207–224 (GIAF…AFAG), 237–259 (WRWG…YFVL), 289–311 (YFFA…FLLP), 326–343 (YIIA…LFVL), 363–385 (TVLG…NSYF), 400–422 (AGYV…GFAI), 427–449 (YFRW…MIHF), 454–476 (QYIG…FVLL), 489–511 (YVAA…GNAI), and 566–588 (AQAR…MFMV).

The protein belongs to the major facilitator superfamily.

The protein resides in the membrane. In terms of biological role, involved in the transport of siderophore triacestylfusarinine C and so has a role in iron homeostasis. The polypeptide is Siderophore iron transporter mirB (mirB) (Emericella nidulans (strain FGSC A4 / ATCC 38163 / CBS 112.46 / NRRL 194 / M139) (Aspergillus nidulans)).